The following is a 445-amino-acid chain: GTPase Der (445 aa).

2 EngA-type G domains span residues Pro3–Gln167 and Ile180–Met353. GTP-binding positions include Gly9–Ser16, Asp56–Phe60, Asn119–Glu122, Gly186–Ser193, Asp233–Leu237, and Asn298–Asp301. One can recognise a KH-like domain in the interval Ala354–Asn438.

The protein belongs to the TRAFAC class TrmE-Era-EngA-EngB-Septin-like GTPase superfamily. EngA (Der) GTPase family. In terms of assembly, associates with the 50S ribosomal subunit.

Its function is as follows. GTPase that plays an essential role in the late steps of ribosome biogenesis. This is GTPase Der from Burkholderia lata (strain ATCC 17760 / DSM 23089 / LMG 22485 / NCIMB 9086 / R18194 / 383).